The following is a 440-amino-acid chain: tRNA(Ile)-lysidine synthase (440 aa).

31–36 (SGGADS) serves as a coordination point for ATP.

This sequence belongs to the tRNA(Ile)-lysidine synthase family.

The protein resides in the cytoplasm. The catalysed reaction is cytidine(34) in tRNA(Ile2) + L-lysine + ATP = lysidine(34) in tRNA(Ile2) + AMP + diphosphate + H(+). In terms of biological role, ligates lysine onto the cytidine present at position 34 of the AUA codon-specific tRNA(Ile) that contains the anticodon CAU, in an ATP-dependent manner. Cytidine is converted to lysidine, thus changing the amino acid specificity of the tRNA from methionine to isoleucine. The chain is tRNA(Ile)-lysidine synthase from Borreliella burgdorferi (strain ATCC 35210 / DSM 4680 / CIP 102532 / B31) (Borrelia burgdorferi).